A 329-amino-acid polypeptide reads, in one-letter code: Alternative oxidase, mitochondrial (329 aa).

A helical membrane pass occupies residues 115–135; the sequence is VISRCLFLETVAGVPGMVGGM. Residues E123, E162, and H165 each contribute to the Fe cation site. Residues 181 to 201 form a helical membrane-spanning segment; sequence VSIIITQAIMYLFLLVAYVIS. Positions 213, 266, and 269 each coordinate Fe cation. The interval 300–329 is disordered; that stretch reads EMYSNQPSGKTRTDFGSEGAKTASNVNKHV.

This sequence belongs to the alternative oxidase family. As to quaternary structure, homodimer; disulfide-linked. Requires Fe cation as cofactor.

Its subcellular location is the mitochondrion inner membrane. In terms of biological role, catalyzes cyanide-resistant oxygen consumption. May increase respiration when the cytochrome respiratory pathway is restricted, or in response to low temperatures. The polypeptide is Alternative oxidase, mitochondrial (AOX) (Trypanosoma brucei brucei).